Here is a 423-residue protein sequence, read N- to C-terminus: Adenylosuccinate synthetase (423 aa).

GTP is bound by residues 13-19 and 41-43; these read GDEGKGK and GHT. Asp14 acts as the Proton acceptor in catalysis. Residues Asp14 and Gly41 each contribute to the Mg(2+) site. IMP contacts are provided by residues 14 to 17, 39 to 42, Thr130, Arg144, Gln223, Thr238, and Arg302; these read DEGK and NAGH. The active-site Proton donor is the His42. 298 to 304 is a substrate binding site; sequence SVTGRKR. Residues Arg304 and 410 to 412 each bind GTP; that span reads SVG.

Belongs to the adenylosuccinate synthetase family. Homodimer. The cofactor is Mg(2+).

The protein resides in the cytoplasm. It catalyses the reaction IMP + L-aspartate + GTP = N(6)-(1,2-dicarboxyethyl)-AMP + GDP + phosphate + 2 H(+). The protein operates within purine metabolism; AMP biosynthesis via de novo pathway; AMP from IMP: step 1/2. Plays an important role in the de novo pathway of purine nucleotide biosynthesis. Catalyzes the first committed step in the biosynthesis of AMP from IMP. This chain is Adenylosuccinate synthetase, found in Porphyromonas gingivalis (strain ATCC BAA-308 / W83).